The following is a 78-amino-acid chain: Pro-glucagon (78 aa).

This sequence belongs to the glucagon family.

Its subcellular location is the secreted. In terms of biological role, plays a key role in glucose metabolism and homeostasis. Regulates blood glucose by increasing gluconeogenesis and decreasing glycolysis. The polypeptide is Pro-glucagon (gcg) (Atractosteus spatula (Alligator gar)).